Consider the following 506-residue polypeptide: NAD(P)H-quinone oxidoreductase subunit 2 (506 aa).

13 consecutive transmembrane segments (helical) span residues alanine 14–alanine 34, tryptophan 42–tryptophan 62, leucine 79–tryptophan 99, proline 108–glycine 128, leucine 132–tyrosine 152, leucine 167–leucine 187, phenylalanine 206–valine 226, proline 240–isoleucine 260, leucine 276–glutamine 296, methionine 302–threonine 322, valine 330–phenylalanine 350, leucine 374–glycine 394, and leucine 409–isoleucine 429.

This sequence belongs to the complex I subunit 2 family. As to quaternary structure, NDH-1 can be composed of about 15 different subunits; different subcomplexes with different compositions have been identified which probably have different functions.

The protein resides in the cellular thylakoid membrane. It catalyses the reaction a plastoquinone + NADH + (n+1) H(+)(in) = a plastoquinol + NAD(+) + n H(+)(out). It carries out the reaction a plastoquinone + NADPH + (n+1) H(+)(in) = a plastoquinol + NADP(+) + n H(+)(out). Functionally, NDH-1 shuttles electrons from an unknown electron donor, via FMN and iron-sulfur (Fe-S) centers, to quinones in the respiratory and/or the photosynthetic chain. The immediate electron acceptor for the enzyme in this species is believed to be plastoquinone. Couples the redox reaction to proton translocation, and thus conserves the redox energy in a proton gradient. Cyanobacterial NDH-1 also plays a role in inorganic carbon-concentration. This is NAD(P)H-quinone oxidoreductase subunit 2 from Prochlorococcus marinus (strain MIT 9215).